The sequence spans 335 residues: Glycerol-3-phosphate dehydrogenase [NAD(P)+] (335 aa).

5 residues coordinate NADPH: S12, W13, H33, R34, and K108. Positions 108, 137, and 139 each coordinate sn-glycerol 3-phosphate. A141 is a binding site for NADPH. Sn-glycerol 3-phosphate contacts are provided by K192, D245, S255, R256, and N257. The active-site Proton acceptor is K192. R256 provides a ligand contact to NADPH. E282 serves as a coordination point for NADPH.

The protein belongs to the NAD-dependent glycerol-3-phosphate dehydrogenase family.

It is found in the cytoplasm. The catalysed reaction is sn-glycerol 3-phosphate + NAD(+) = dihydroxyacetone phosphate + NADH + H(+). It catalyses the reaction sn-glycerol 3-phosphate + NADP(+) = dihydroxyacetone phosphate + NADPH + H(+). The protein operates within membrane lipid metabolism; glycerophospholipid metabolism. In terms of biological role, catalyzes the reduction of the glycolytic intermediate dihydroxyacetone phosphate (DHAP) to sn-glycerol 3-phosphate (G3P), the key precursor for phospholipid synthesis. The protein is Glycerol-3-phosphate dehydrogenase [NAD(P)+] of Methylococcus capsulatus (strain ATCC 33009 / NCIMB 11132 / Bath).